The chain runs to 318 residues: tRNA dimethylallyltransferase (318 aa).

13 to 20 is an ATP binding site; sequence GPTAVGKT. Substrate is bound at residue 15-20; sequence TAVGKT. The tract at residues 38 to 41 is interaction with substrate tRNA; it reads DSMQ.

This sequence belongs to the IPP transferase family. Monomer. The cofactor is Mg(2+).

The catalysed reaction is adenosine(37) in tRNA + dimethylallyl diphosphate = N(6)-dimethylallyladenosine(37) in tRNA + diphosphate. Its function is as follows. Catalyzes the transfer of a dimethylallyl group onto the adenine at position 37 in tRNAs that read codons beginning with uridine, leading to the formation of N6-(dimethylallyl)adenosine (i(6)A). This Bacillus pumilus (strain SAFR-032) protein is tRNA dimethylallyltransferase.